Here is a 276-residue protein sequence, read N- to C-terminus: MTVVGELDPQKLTALVATAAEILDAASVPFVAGHRADSAVRKQGNDFATEVDLAIERQVVRALTEATGIGVHGEEFGGEPIDSPLVWVLDPIDGTFNYAAGSPMAAILLGLLADGEPVAGLTWLPFTGEKYSALVGGPLYSDGKPCPPLGSPTLADSIIGIQTFNIDSRGRFPGRYRVEVLANLSRVCSRVRMHGATGVDLAYVAAGILGGAISFGHHIWDHAAGVALVRAAGGVVTDLTGAPWTVDSKSVLAAAPGVHEKMLEIVKSTGKPEDYL.

Mg(2+) is bound by residues glutamate 74, aspartate 90, isoleucine 92, and aspartate 93. Glutamate 74 provides a ligand contact to substrate. Substrate-binding positions include 92–95 (IDGT), arginine 192, and aspartate 221. Position 221 (aspartate 221) interacts with Mg(2+).

Belongs to the inositol monophosphatase superfamily. Requires Mg(2+) as cofactor.

The enzyme catalyses a myo-inositol phosphate + H2O = myo-inositol + phosphate. It participates in polyol metabolism; myo-inositol biosynthesis; myo-inositol from D-glucose 6-phosphate: step 2/2. Functionally, catalyzes the dephosphorylation of inositol 1-phosphate (I-1-P) to yield free myo-inositol, a key metabolite in mycobacteria. This Mycolicibacterium smegmatis (strain ATCC 700084 / mc(2)155) (Mycobacterium smegmatis) protein is Inositol-1-monophosphatase ImpA (impA).